A 603-amino-acid polypeptide reads, in one-letter code: ATP-dependent zinc metalloprotease FtsH (603 aa).

Residues 1-2 (MK) are Stromal-facing. A helical transmembrane segment spans residues 3-23 (NLWIWSLPLIVLAFIGWQELA). At 24–101 (NQMPVATSRM…DVDVHAVSNW (78 aa)) the chain is on the lumenal side. A helical transmembrane segment spans residues 102–122 (INVASNWIIPLIIIGVVIWLL). Topologically, residues 123–603 (SRSASSNTTG…SQAARLTAVN (481 aa)) are stromal. Residue 194-201 (GPPGTGKT) coordinates ATP. Histidine 415 is a binding site for Zn(2+). The active site involves glutamate 416. 2 residues coordinate Zn(2+): histidine 419 and aspartate 493.

The protein in the central section; belongs to the AAA ATPase family. This sequence in the C-terminal section; belongs to the peptidase M41 family. In terms of assembly, homohexamer. Zn(2+) serves as cofactor.

It localises to the plastid. It is found in the chloroplast thylakoid membrane. Acts as a processive, ATP-dependent zinc metallopeptidase. In Cyanidioschyzon merolae (strain NIES-3377 / 10D) (Unicellular red alga), this protein is ATP-dependent zinc metalloprotease FtsH.